The primary structure comprises 357 residues: N-methyltransferase dtpB (357 aa).

This sequence belongs to the methyltransferase superfamily.

It participates in alkaloid biosynthesis. Its function is as follows. N-methyltransferase; part of the gene cluster that mediates the biosynthesis of the dimeric diketopiperazine alkaloid ditryptophenaline. The nonribosomal peptide synthase dtpA accepts L-tryptophan and L-phenylalanine as its substrates and forms the phenylalanyl-tryptophanyl cyclic dipeptide product cyclophenylalanyltryptophenyl. The N-methyltransferase dtpB is responsible for the N-methylation of cyclophenylalanyltryptophenyl to yield cyclo-N-methylphenylalanyltryptophenyl. The cytochrome P450 monooxygenase is responsible not only for pyrroloindole ring formation but also for concurrent dimerization of N-methylphenylalanyltryptophanyl diketopiperazine monomers into a homodimeric product. The chain is N-methyltransferase dtpB from Aspergillus flavus (strain ATCC 200026 / FGSC A1120 / IAM 13836 / NRRL 3357 / JCM 12722 / SRRC 167).